Consider the following 331-residue polypeptide: GTP 3',8-cyclase (331 aa).

Positions 6-231 (PFGRTISYLR…TDIPFKTGGP (226 aa)) constitute a Radical SAM core domain. GTP is bound at residue Arg-15. [4Fe-4S] cluster contacts are provided by Cys-22 and Cys-26. Tyr-28 provides a ligand contact to S-adenosyl-L-methionine. Cys-29 provides a ligand contact to [4Fe-4S] cluster. Residue Arg-64 participates in GTP binding. Gly-68 is a binding site for S-adenosyl-L-methionine. Residue Thr-98 coordinates GTP. Ser-122 contributes to the S-adenosyl-L-methionine binding site. Lys-158 contributes to the GTP binding site. Position 192 (Met-192) interacts with S-adenosyl-L-methionine. The [4Fe-4S] cluster site is built by Cys-255 and Cys-258. 260 to 262 (RVR) is a GTP binding site. Cys-272 lines the [4Fe-4S] cluster pocket.

The protein belongs to the radical SAM superfamily. MoaA family. In terms of assembly, monomer and homodimer. [4Fe-4S] cluster is required as a cofactor.

It carries out the reaction GTP + AH2 + S-adenosyl-L-methionine = (8S)-3',8-cyclo-7,8-dihydroguanosine 5'-triphosphate + 5'-deoxyadenosine + L-methionine + A + H(+). Its pathway is cofactor biosynthesis; molybdopterin biosynthesis. Functionally, catalyzes the cyclization of GTP to (8S)-3',8-cyclo-7,8-dihydroguanosine 5'-triphosphate. This Mesorhizobium japonicum (strain LMG 29417 / CECT 9101 / MAFF 303099) (Mesorhizobium loti (strain MAFF 303099)) protein is GTP 3',8-cyclase.